The chain runs to 96 residues: Co-chaperonin GroES (96 aa).

The protein belongs to the GroES chaperonin family. Heptamer of 7 subunits arranged in a ring. Interacts with the chaperonin GroEL.

Its subcellular location is the cytoplasm. In terms of biological role, together with the chaperonin GroEL, plays an essential role in assisting protein folding. The GroEL-GroES system forms a nano-cage that allows encapsulation of the non-native substrate proteins and provides a physical environment optimized to promote and accelerate protein folding. GroES binds to the apical surface of the GroEL ring, thereby capping the opening of the GroEL channel. The chain is Co-chaperonin GroES from Haemophilus influenzae (strain ATCC 51907 / DSM 11121 / KW20 / Rd).